Here is a 162-residue protein sequence, read N- to C-terminus: MDYSENVQNKNFTPISQPPNLTRDQEHAIMVSTLRQVISNTGGDTSSSHYIAASEALPPSDAGPCPLCGVTSCYGCAFPQHEEIKQEKKHKGVRKKPSGKWSAEIWDPSTRTRRWLGTFPTAEMAADAYDEAAAALVEKRSARRGSKKGEGSIHQEVGGGDD.

Disordered stretches follow at residues 1 to 21, 84 to 103, and 139 to 162; these read MDYS…PPNL, IKQE…KWSA, and KRSA…GGDD. Residues 87 to 98 are compositionally biased toward basic residues; it reads EKKHKGVRKKPS. The AP2/ERF DNA-binding region spans 89-146; sequence KHKGVRKKPSGKWSAEIWDPSTRTRRWLGTFPTAEMAADAYDEAAAALVEKRSARRGS.

The protein belongs to the AP2/ERF transcription factor family. ERF subfamily.

The protein localises to the nucleus. Probably acts as a transcriptional activator. Binds to the GCC-box pathogenesis-related promoter element. May be involved in the regulation of gene expression by stress factors and by components of stress signal transduction pathways. In Arabidopsis thaliana (Mouse-ear cress), this protein is Putative ethylene-responsive transcription factor ERF121 (ERF121).